Here is a 349-residue protein sequence, read N- to C-terminus: Protein arginine N-methyltransferase 6 (349 aa).

The region spanning 17–324 is the SAM-dependent MTase PRMT-type domain; that stretch reads DYMYFDSYSD…EENSRHICIR (308 aa). S-adenosyl-L-methionine is bound by residues His30, Arg39, Gly63, Glu85, and Glu114. Catalysis depends on residues Glu128 and Glu137.

This sequence belongs to the class I-like SAM-binding methyltransferase superfamily. Protein arginine N-methyltransferase family. PRMT6 subfamily.

The protein resides in the nucleus. It catalyses the reaction L-arginyl-[protein] + 2 S-adenosyl-L-methionine = N(omega),N(omega)-dimethyl-L-arginyl-[protein] + 2 S-adenosyl-L-homocysteine + 2 H(+). Functionally, arginine methyltransferase that can catalyze the formation of both omega-N monomethylarginine (MMA) and asymmetrical dimethylarginine (aDMA), with a strong preference for the formation of aDMA. Preferentially methylates arginyl residues present in a glycine and arginine-rich domain and displays preference for monomethylated substrates. Specifically mediates the asymmetric dimethylation of histone H3 'Arg-2' to form H3R2me2a. H3R2me2a represents a specific tag for epigenetic transcriptional repression and is mutually exclusive with methylation on histone H3 'Lys-4' (H3K4me2 and H3K4me3). Acts as a transcriptional repressor of various genes such as HOXA2, THBS1 and TP53. Repression of TP53 blocks cellular senescence. Also methylates histone H2A and H4 'Arg-3' (H2AR3me and H4R3me, respectively). Acts as a regulator of DNA base excision during DNA repair by mediating the methylation of DNA polymerase beta (POLB), leading to the stimulation of its polymerase activity by enhancing DNA binding and processivity. Methylates HMGA1. Regulates alternative splicing events. Acts as a transcriptional coactivator of a number of steroid hormone receptors including ESR1, ESR2, PGR and NR3C1. The polypeptide is Protein arginine N-methyltransferase 6 (prmt6) (Danio rerio (Zebrafish)).